The sequence spans 317 residues: 4-hydroxy-3-methylbut-2-enyl diphosphate reductase (317 aa).

Residue cysteine 12 coordinates [4Fe-4S] cluster. (2E)-4-hydroxy-3-methylbut-2-enyl diphosphate is bound by residues histidine 41 and histidine 74. Residues histidine 41 and histidine 74 each contribute to the dimethylallyl diphosphate site. 2 residues coordinate isopentenyl diphosphate: histidine 41 and histidine 74. A [4Fe-4S] cluster-binding site is contributed by cysteine 96. Histidine 124 lines the (2E)-4-hydroxy-3-methylbut-2-enyl diphosphate pocket. Histidine 124 lines the dimethylallyl diphosphate pocket. Residue histidine 124 participates in isopentenyl diphosphate binding. Catalysis depends on glutamate 126, which acts as the Proton donor. Threonine 168 is a binding site for (2E)-4-hydroxy-3-methylbut-2-enyl diphosphate. Position 198 (cysteine 198) interacts with [4Fe-4S] cluster. 4 residues coordinate (2E)-4-hydroxy-3-methylbut-2-enyl diphosphate: serine 226, serine 227, asparagine 228, and serine 270. Dimethylallyl diphosphate is bound by residues serine 226, serine 227, asparagine 228, and serine 270. The isopentenyl diphosphate site is built by serine 226, serine 227, asparagine 228, and serine 270.

The protein belongs to the IspH family. [4Fe-4S] cluster serves as cofactor.

It catalyses the reaction isopentenyl diphosphate + 2 oxidized [2Fe-2S]-[ferredoxin] + H2O = (2E)-4-hydroxy-3-methylbut-2-enyl diphosphate + 2 reduced [2Fe-2S]-[ferredoxin] + 2 H(+). The enzyme catalyses dimethylallyl diphosphate + 2 oxidized [2Fe-2S]-[ferredoxin] + H2O = (2E)-4-hydroxy-3-methylbut-2-enyl diphosphate + 2 reduced [2Fe-2S]-[ferredoxin] + 2 H(+). The protein operates within isoprenoid biosynthesis; dimethylallyl diphosphate biosynthesis; dimethylallyl diphosphate from (2E)-4-hydroxy-3-methylbutenyl diphosphate: step 1/1. Its pathway is isoprenoid biosynthesis; isopentenyl diphosphate biosynthesis via DXP pathway; isopentenyl diphosphate from 1-deoxy-D-xylulose 5-phosphate: step 6/6. Catalyzes the conversion of 1-hydroxy-2-methyl-2-(E)-butenyl 4-diphosphate (HMBPP) into a mixture of isopentenyl diphosphate (IPP) and dimethylallyl diphosphate (DMAPP). Acts in the terminal step of the DOXP/MEP pathway for isoprenoid precursor biosynthesis. This chain is 4-hydroxy-3-methylbut-2-enyl diphosphate reductase, found in Hahella chejuensis (strain KCTC 2396).